The sequence spans 436 residues: Adenylosuccinate synthetase (436 aa).

GTP is bound by residues 12–18 (GDEGKGK) and 40–42 (GHT). Residue D13 is the Proton acceptor of the active site. 2 residues coordinate Mg(2+): D13 and G40. IMP is bound by residues 13–16 (DEGK), 38–41 (NAGH), T128, R142, Q223, T238, and R302. H41 functions as the Proton donor in the catalytic mechanism. Position 298–304 (298–304 (TTTGRRR)) interacts with substrate. Residues R304, 330–332 (KLD), and 412–414 (SLG) each bind GTP.

The protein belongs to the adenylosuccinate synthetase family. In terms of assembly, homodimer. The cofactor is Mg(2+).

The protein localises to the cytoplasm. The catalysed reaction is IMP + L-aspartate + GTP = N(6)-(1,2-dicarboxyethyl)-AMP + GDP + phosphate + 2 H(+). It functions in the pathway purine metabolism; AMP biosynthesis via de novo pathway; AMP from IMP: step 1/2. Its function is as follows. Plays an important role in the de novo pathway of purine nucleotide biosynthesis. Catalyzes the first committed step in the biosynthesis of AMP from IMP. This chain is Adenylosuccinate synthetase, found in Prochlorococcus marinus (strain AS9601).